The chain runs to 248 residues: Pulmonary surfactant-associated protein A2 (248 aa).

Positions 1–20 (MWLCPLALTLILMAASGAAC) are cleaved as a signal peptide. The Collagen-like domain occupies 28 to 100 (GSPGIPGTPG…AGERGPPGLP (73 aa)). A 4-hydroxyproline mark is found at Pro-30, Pro-33, Pro-36, Pro-42, Pro-54, Pro-57, Pro-63, Pro-67, and Pro-70. The disordered stretch occupies residues 33-101 (PGTPGSHGLP…GERGPPGLPA (69 aa)). Residues 42 to 51 (PGRDGRDGVK) are compositionally biased toward basic and acidic residues. Residues 54-70 (PGPPGPMGPPGETPCPP) show a composition bias toward pro residues. Over residues 71 to 82 (GNNGLPGAPGVP) the composition is skewed to low complexity. Residues 84–93 (ERGEKGEAGE) are compositionally biased toward basic and acidic residues. Residues 132-248 (MTVGEKVFSS…LYSRLTICEF (117 aa)) enclose the C-type lectin domain. Cystine bridges form between Cys-155-Cys-246 and Cys-224-Cys-238. Asn-207 carries N-linked (GlcNAc...) asparagine glycosylation.

Belongs to the SFTPA family. Oligomeric complex of 6 set of homotrimers. In terms of processing, N-acetylated.

It localises to the secreted. The protein localises to the extracellular space. The protein resides in the extracellular matrix. It is found in the surface film. Functionally, in presence of calcium ions, it binds to surfactant phospholipids and contributes to lower the surface tension at the air-liquid interface in the alveoli of the mammalian lung and is essential for normal respiration. The sequence is that of Pulmonary surfactant-associated protein A2 (SFTPA2) from Homo sapiens (Human).